Consider the following 515-residue polypeptide: Bifunctional purine biosynthesis protein PurH (515 aa).

In terms of domain architecture, MGS-like spans 1–145 (MTKRALISVS…KNHASVTVVV (145 aa)).

It belongs to the PurH family.

It carries out the reaction (6R)-10-formyltetrahydrofolate + 5-amino-1-(5-phospho-beta-D-ribosyl)imidazole-4-carboxamide = 5-formamido-1-(5-phospho-D-ribosyl)imidazole-4-carboxamide + (6S)-5,6,7,8-tetrahydrofolate. It catalyses the reaction IMP + H2O = 5-formamido-1-(5-phospho-D-ribosyl)imidazole-4-carboxamide. It participates in purine metabolism; IMP biosynthesis via de novo pathway; 5-formamido-1-(5-phospho-D-ribosyl)imidazole-4-carboxamide from 5-amino-1-(5-phospho-D-ribosyl)imidazole-4-carboxamide (10-formyl THF route): step 1/1. Its pathway is purine metabolism; IMP biosynthesis via de novo pathway; IMP from 5-formamido-1-(5-phospho-D-ribosyl)imidazole-4-carboxamide: step 1/1. This chain is Bifunctional purine biosynthesis protein PurH, found in Streptococcus equi subsp. zooepidemicus (strain H70).